The sequence spans 116 residues: Large ribosomal subunit protein bL17 (116 aa).

Belongs to the bacterial ribosomal protein bL17 family. Part of the 50S ribosomal subunit. Contacts protein L32.

This Helicobacter pylori (strain J99 / ATCC 700824) (Campylobacter pylori J99) protein is Large ribosomal subunit protein bL17.